The following is a 364-amino-acid chain: Transcription factor TGA4 (364 aa).

A disordered region spans residues 39–79; sequence PGSIIIPTNEKPDSLSEDTSHGTEGTPHKFDQEASTSRHPD. Positions 48–79 are enriched in basic and acidic residues; that stretch reads EKPDSLSEDTSHGTEGTPHKFDQEASTSRHPD. One can recognise a bZIP domain in the interval 78-141; sequence PDKIQRRLAQ…NGVDTNALSF (64 aa). 2 coiled-coil regions span residues 79–127 and 257–277; these read DKIQ…RQQG and NLRQ…EKLQ. The interval 80–100 is basic motif; it reads KIQRRLAQNREAARKSRLRKK. The leucine-zipper stretch occupies residues 106–120; sequence LETSRLKLIHLEQEL. Positions 149-359 constitute a DOG1 domain; sequence IVAFEMEYGH…RALSSSWAAR (211 aa). Residues Cys256 and Cys262 are joined by a disulfide bond.

Belongs to the bZIP family. Binds DNA as a dimer. Interaction with the Dof domain proteins OBP1, OBP2 or OBP3 enhances the binding to the ocs element. Interacts with RAP2-3/EPB, an ethylene-responsive element binding protein. The reduced form interacts with NPR1. In terms of tissue distribution, predominantly expressed in roots.

The protein localises to the nucleus. Its function is as follows. Transcriptional activator that binds specifically to the DNA sequence 5'-TGACG-3'. Recognizes ocs elements like the as-1 motif of the cauliflower mosaic virus 35S promoter. Binding to the as-1-like cis elements mediate auxin- and salicylic acid-inducible transcription. May be involved in the induction of the systemic acquired resistance (SAR) via its interaction with NPR1. Could also bind to the Hex-motif (5'-TGACGTGG-3') another cis-acting element found in plant histone promoters. This is Transcription factor TGA4 (TGA4) from Arabidopsis thaliana (Mouse-ear cress).